The primary structure comprises 175 residues: MDMRQVNSLSYEEFVETFGNVVERCPVVAAAVWSGRPFANSHDLEASIGEFIDSLPVAGQEGIVRCHPDLAGRDLKRGALTAESRGEQTQAGLTLLDAGDAARMNRLNAQYKERFGFPFVICARMNNKEEILLRLAERLGNEPAQERQCAIEEVKKICQLRLQDIIQCPATHTKL.

Histidine 67 (proton donor) is an active-site residue. Substrate is bound by residues proline 68, 84–88 (SRGEQ), and 119–123 (FVICA). The short motif at 173–175 (TKL) is the Microbody targeting signal element.

The protein belongs to the OHCU decarboxylase family. Homodimer.

It is found in the peroxisome. The catalysed reaction is 5-hydroxy-2-oxo-4-ureido-2,5-dihydro-1H-imidazole-5-carboxylate + H(+) = (S)-allantoin + CO2. It participates in purine metabolism; urate degradation; (S)-allantoin from urate: step 3/3. In terms of biological role, catalyzes the stereoselective decarboxylation of 2-oxo-4-hydroxy-4-carboxy-5-ureidoimidazoline (OHCU) to (S)-allantoin. In Amia calva (Bowfin), this protein is 2-oxo-4-hydroxy-4-carboxy-5-ureidoimidazoline decarboxylase (urad).